The primary structure comprises 147 residues: Cytochrome c-type biogenesis protein CcmE (147 aa).

At 1-9 the chain is on the cytoplasmic side; it reads MKSLKKKRR. A helical; Signal-anchor for type II membrane protein transmembrane segment spans residues 10 to 30; sequence IQILVAAAVALVLAVGLIGYG. Topologically, residues 31–147 are periplasmic; the sequence is FRDGINLYRS…EQGVYQEPNS (117 aa). Positions 123 and 127 each coordinate heme.

This sequence belongs to the CcmE/CycJ family.

The protein localises to the cell inner membrane. Its function is as follows. Heme chaperone required for the biogenesis of c-type cytochromes. Transiently binds heme delivered by CcmC and transfers the heme to apo-cytochromes in a process facilitated by CcmF and CcmH. This chain is Cytochrome c-type biogenesis protein CcmE, found in Paracoccus denitrificans (strain Pd 1222).